The sequence spans 98 residues: Large ribosomal subunit protein uL23 (98 aa).

The protein belongs to the universal ribosomal protein uL23 family. Part of the 50S ribosomal subunit. Contacts protein L29, and trigger factor when it is bound to the ribosome.

In terms of biological role, one of the early assembly proteins it binds 23S rRNA. One of the proteins that surrounds the polypeptide exit tunnel on the outside of the ribosome. Forms the main docking site for trigger factor binding to the ribosome. The chain is Large ribosomal subunit protein uL23 from Rickettsia rickettsii (strain Iowa).